The primary structure comprises 273 residues: Small ribosomal subunit protein uS3 (273 aa).

The 69-residue stretch at 43–111 (IRQLMSTGME…QVQLNILEVK (69 aa)) folds into the KH type-2 domain. Residues 218-227 (QQAAAAPSRG) show a composition bias toward low complexity. The disordered stretch occupies residues 218–273 (QQAAAAPSRGRAGDRPGRPGGDRRRRNDRPAAEAAPAAVEAPAAEAAAPAAEGGQA). A compositionally biased stretch (basic and acidic residues) spans 228–239 (RAGDRPGRPGGD). The span at 249 to 273 (AEAAPAAVEAPAAEAAAPAAEGGQA) shows a compositional bias: low complexity.

Belongs to the universal ribosomal protein uS3 family. As to quaternary structure, part of the 30S ribosomal subunit. Forms a tight complex with proteins S10 and S14.

Its function is as follows. Binds the lower part of the 30S subunit head. Binds mRNA in the 70S ribosome, positioning it for translation. The polypeptide is Small ribosomal subunit protein uS3 (Paenarthrobacter aurescens (strain TC1)).